A 74-amino-acid polypeptide reads, in one-letter code: MARVNSLKCALCFIVLILFVQLNCIPETRVMAVELSRVFLQTSSTDCGEPCVYIPCTITALLGCSCLNKVCVRP.

The N-terminal stretch at 1 to 24 (MARVNSLKCALCFIVLILFVQLNC) is a signal peptide. Residues 25–43 (IPETRVMAVELSRVFLQTS) constitute a propeptide that is removed on maturation. 3 disulfide bridges follow: Cys47–Cys64, Cys51–Cys66, and Cys56–Cys71.

In terms of processing, contains 3 disulfide bonds. In terms of tissue distribution, expressed in midvein, lamina and periphery of leaves (at protein level).

Its function is as follows. Probably participates in a plant defense mechanism. This is Acyclotide phyb-K from Petunia hybrida (Petunia).